The primary structure comprises 238 residues: Ethylene-responsive transcription factor ERN3 (238 aa).

The AP2/ERF DNA-binding region spans 24-81 (KFVGVRQRASGKWAAEIKDTSKNIRMWLGTYKTAEEAARAYDEAAFLLRGTNTRTNFS).

It belongs to the AP2/ERF transcription factor family. ERF subfamily. Expressed in roots, root hairs and leaves.

The protein localises to the nucleus. Functionally, transcription factor involved in symbiotic nodule signaling in response to rhizobial Nod factors (NFs). Binds to the GCC box (NF-responsive box) of ENOD11 promoter. May act as transcriptional repressor of NF-responsive box-containing target gene promoters in root hairs. This chain is Ethylene-responsive transcription factor ERN3, found in Medicago truncatula (Barrel medic).